A 166-amino-acid polypeptide reads, in one-letter code: Small ribosomal subunit protein uS5 (166 aa).

An S5 DRBM domain is found at 11–74 (LREKLVAINR…EKARANMKRV (64 aa)).

The protein belongs to the universal ribosomal protein uS5 family. In terms of assembly, part of the 30S ribosomal subunit. Contacts proteins S4 and S8.

Its function is as follows. With S4 and S12 plays an important role in translational accuracy. Functionally, located at the back of the 30S subunit body where it stabilizes the conformation of the head with respect to the body. This is Small ribosomal subunit protein uS5 from Alkalilimnicola ehrlichii (strain ATCC BAA-1101 / DSM 17681 / MLHE-1).